A 370-amino-acid polypeptide reads, in one-letter code: S-adenosylmethionine:tRNA ribosyltransferase-isomerase (370 aa).

It belongs to the QueA family. In terms of assembly, monomer.

It localises to the cytoplasm. It catalyses the reaction 7-aminomethyl-7-carbaguanosine(34) in tRNA + S-adenosyl-L-methionine = epoxyqueuosine(34) in tRNA + adenine + L-methionine + 2 H(+). It participates in tRNA modification; tRNA-queuosine biosynthesis. Functionally, transfers and isomerizes the ribose moiety from AdoMet to the 7-aminomethyl group of 7-deazaguanine (preQ1-tRNA) to give epoxyqueuosine (oQ-tRNA). The polypeptide is S-adenosylmethionine:tRNA ribosyltransferase-isomerase (Synechococcus sp. (strain WH7803)).